A 155-amino-acid chain; its full sequence is Endoribonuclease YbeY (155 aa).

Zn(2+) is bound by residues H110, H114, and H120.

It belongs to the endoribonuclease YbeY family. It depends on Zn(2+) as a cofactor.

Its subcellular location is the cytoplasm. Functionally, single strand-specific metallo-endoribonuclease involved in late-stage 70S ribosome quality control and in maturation of the 3' terminus of the 16S rRNA. The sequence is that of Endoribonuclease YbeY from Deinococcus radiodurans (strain ATCC 13939 / DSM 20539 / JCM 16871 / CCUG 27074 / LMG 4051 / NBRC 15346 / NCIMB 9279 / VKM B-1422 / R1).